Here is a 362-residue protein sequence, read N- to C-terminus: Outer envelope protein 39, chloroplastic (362 aa).

The protein belongs to the OEP80 (TC 1.B.33.2) family. Expressed in germinating seeds. Expressed in the vasculature of roots, cotyledons and leaves.

It localises to the plastid. It is found in the chloroplast outer membrane. In terms of biological role, beta-barrel pore-forming protein which possesses voltage-dependent channel activity. Required for proper plastid development. Involved in the maintenance of metabolic homeostasis of full-grown plants. In Arabidopsis thaliana (Mouse-ear cress), this protein is Outer envelope protein 39, chloroplastic.